Here is a 493-residue protein sequence, read N- to C-terminus: Protein translocase subunit SecY (493 aa).

At 1 to 21 (MDSVIRALQPYFERIPSVERP) the chain is on the cytoplasmic side. A helical membrane pass occupies residues 22 to 48 (KGHVHFREKFGWTAAILLLYFILSNVP). Topologically, residues 49-59 (VFGLSPESIDI) are extracellular. The segment at residues 60-67 (FAAYRALF) is an intramembrane region (helical). Residues 60-88 (FAAYRALFAGSTGSIIALGIGPIVTASII) form a discontinuously helical membrane-spanning segment. An intramembrane segment occupies 68 to 79 (AGSTGSIIALGI). Positions 80–88 (GPIVTASII) form an intramembrane region, helical. Residues 89 to 109 (LQLLVGAGIIKLDLTNPEDRA) lie on the Cytoplasmic side of the membrane. The helical transmembrane segment at 110–134 (AYQDFQRFLVFVMIAVEAIPQIAGG) threads the bilayer. The Extracellular portion of the chain corresponds to 135–151 (LLKPDLNLAAQLGVSPG). The chain crosses the membrane as a helical span at residues 152 to 176 (IISFLIFIQLFIGGVLIVYMDEVVS). The Cytoplasmic portion of the chain corresponds to 177 to 182 (KWGIGS). The helical transmembrane segment at 183 to 201 (GVSLFILAGIAQSIVVGLF) threads the bilayer. The Extracellular portion of the chain corresponds to 202 to 244 (NWVIPPNSAMPAGIIPRWIWIAQNYPLDQLFTGSGLAFLLIQG). Residues 245-266 (GILALITTAAIILLVVFFEGTR) form a helical membrane-spanning segment. The Cytoplasmic segment spans residues 267–291 (VEIPLAHAVARGARGRFPIKLIYAS). A helical transmembrane segment spans residues 292 to 313 (VLPMIFVRALQANVVALGQVLH). Residues 314 to 367 (ARGVTIFGEFVNGKAVSGLMFFLQPVSSPYDWIPSLVKSQGAAFAAIPDWMIYL) lie on the Extracellular side of the membrane. Residues 368-387 (HLLIDALILVVGGIIFAWFW) traverse the membrane as a helical segment. Over 388–430 (VETSGMDARTVASQIAKSGMQVPGFRKSPQVLERVLSRYIPKV) the chain is Cytoplasmic. The helical transmembrane segment at 431–449 (TILGGAIIGILTLVANMLG) threads the bilayer. Over 450–454 (TIGNV) the chain is Extracellular. The helical transmembrane segment at 455-469 (SGTGLLLAVSIAYRF) threads the bilayer. At 470-493 (YEDLAKEQLTEMHPLIRRMLGEEA) the chain is on the cytoplasmic side.

The protein belongs to the SecY/SEC61-alpha family. In terms of assembly, component of the Sec protein translocase complex. Heterotrimer consisting of alpha (SecY), beta (SecG) and gamma (SecE) subunits. The heterotrimers can form oligomers, although 1 heterotrimer is thought to be able to translocate proteins. Interacts with the ribosome. May interact with SecDF, and other proteins may be involved.

The protein resides in the cell membrane. In terms of biological role, the central subunit of the protein translocation channel SecYEG. Consists of two halves formed by TMs 1-5 and 6-10. These two domains form a lateral gate at the front which open onto the bilayer between TMs 2 and 7, and are clamped together by SecE at the back. The channel is closed by both a pore ring composed of hydrophobic SecY resides and a short helix (helix 2A) on the extracellular side of the membrane which forms a plug. The plug probably moves laterally to allow the channel to open. The ring and the pore may move independently. The chain is Protein translocase subunit SecY from Archaeoglobus fulgidus (strain ATCC 49558 / DSM 4304 / JCM 9628 / NBRC 100126 / VC-16).